A 389-amino-acid chain; its full sequence is MNFHEYQSKQLLAEYGIPVPAGKVAATPDEAVAAANSLGQGPWMVKAQIHAGGRGKAGGVKFCKTTDDVKAAAAKMLGTKMATYQTAGVELPVNLVLVTTAGEIVKELYLSVLVDRGTKTITYIASSEGGVEIEQVAAETPELIHSLNVDFVEGVQGYHGRDFGFKLGLTAKQAGQFASIMVNLYRLFNEKDLALVEINPLAILDDGNLYALDGKFDSDDNAAFRQKALVAMRDKTQEDPTEVIASELDINYVTMDGNIGCMVNGAGLAMATMDVIKLNGGEPANFLDVGGGANKQRVIEAFKLILSSDKVEGIFVNIFGGIVRCDMIAEGIIAAVKEVGVKVPVVVRLEGTNVEEGKQLLRDSGMAIIPADNINDGAKKIVEAVKNAA.

One can recognise an ATP-grasp domain in the interval 9–244; it reads KQLLAEYGIP…KTQEDPTEVI (236 aa). ATP-binding positions include Lys-46, 53–55, Gly-102, and Glu-107; that span reads GRG. The Mg(2+) site is built by Asn-199 and Asp-213. Substrate contacts are provided by residues Asn-264 and 321–323; that span reads GIV.

This sequence belongs to the succinate/malate CoA ligase beta subunit family. As to quaternary structure, heterotetramer of two alpha and two beta subunits. Mg(2+) serves as cofactor.

It carries out the reaction succinate + ATP + CoA = succinyl-CoA + ADP + phosphate. It catalyses the reaction GTP + succinate + CoA = succinyl-CoA + GDP + phosphate. It functions in the pathway carbohydrate metabolism; tricarboxylic acid cycle; succinate from succinyl-CoA (ligase route): step 1/1. Succinyl-CoA synthetase functions in the citric acid cycle (TCA), coupling the hydrolysis of succinyl-CoA to the synthesis of either ATP or GTP and thus represents the only step of substrate-level phosphorylation in the TCA. The beta subunit provides nucleotide specificity of the enzyme and binds the substrate succinate, while the binding sites for coenzyme A and phosphate are found in the alpha subunit. The protein is Succinate--CoA ligase [ADP-forming] subunit beta of Stenotrophomonas maltophilia (strain R551-3).